Reading from the N-terminus, the 260-residue chain is Small ribosomal subunit protein bS6 (260 aa).

Belongs to the bacterial ribosomal protein bS6 family.

Its function is as follows. Binds together with bS18 to 16S ribosomal RNA. This is Small ribosomal subunit protein bS6 from Wolbachia sp. subsp. Brugia malayi (strain TRS).